The sequence spans 229 residues: Urease accessory protein UreG (229 aa).

Residues 1-15 are compositionally biased toward basic and acidic residues; the sequence is MPPHFIDGEPHDHQH. Positions 1-20 are disordered; sequence MPPHFIDGEPHDHQHDRPRR. Residue 34 to 41 coordinates GTP; sequence GPVGSGKT.

It belongs to the SIMIBI class G3E GTPase family. UreG subfamily. Homodimer. UreD, UreF and UreG form a complex that acts as a GTP-hydrolysis-dependent molecular chaperone, activating the urease apoprotein by helping to assemble the nickel containing metallocenter of UreC. The UreE protein probably delivers the nickel.

Its subcellular location is the cytoplasm. Functionally, facilitates the functional incorporation of the urease nickel metallocenter. This process requires GTP hydrolysis, probably effectuated by UreG. The chain is Urease accessory protein UreG from Rhodococcus jostii (strain RHA1).